We begin with the raw amino-acid sequence, 206 residues long: Large ribosomal subunit protein uL4 (206 aa).

A disordered region spans residues 46 to 89 (GNRAQKTRAEVKHSTKKPWRQKGTGRARSGMTSSPLWRKGGRAF). Basic residues predominate over residues 59-70 (STKKPWRQKGTG).

The protein belongs to the universal ribosomal protein uL4 family. Part of the 50S ribosomal subunit.

Functionally, one of the primary rRNA binding proteins, this protein initially binds near the 5'-end of the 23S rRNA. It is important during the early stages of 50S assembly. It makes multiple contacts with different domains of the 23S rRNA in the assembled 50S subunit and ribosome. Forms part of the polypeptide exit tunnel. This chain is Large ribosomal subunit protein uL4, found in Neisseria gonorrhoeae (strain NCCP11945).